A 102-amino-acid polypeptide reads, in one-letter code: Large ribosomal subunit protein uL24 (102 aa).

Belongs to the universal ribosomal protein uL24 family. In terms of assembly, part of the 50S ribosomal subunit.

Its function is as follows. One of two assembly initiator proteins, it binds directly to the 5'-end of the 23S rRNA, where it nucleates assembly of the 50S subunit. One of the proteins that surrounds the polypeptide exit tunnel on the outside of the subunit. This is Large ribosomal subunit protein uL24 from Alcanivorax borkumensis (strain ATCC 700651 / DSM 11573 / NCIMB 13689 / SK2).